A 50-amino-acid chain; its full sequence is Mast cell degranulating peptide (50 aa).

A signal peptide spans 1 to 27; the sequence is MISMLRCTFFFLSVILITSYFVTPTMS. K29 is modified (N6-formyllysine; partial). Disulfide bonds link C30–C42 and C32–C46. N6-formyllysine; partial occurs at positions 44 and 48. Residue N49 is modified to Asparagine amide.

As to expression, expressed by the venom gland.

The protein localises to the secreted. Its function is as follows. Potent anti-inflammatory agent. At low concentrations, mediates the degranulation of mast cells thus evoking an inflammatory response. Also acts as a neurotoxin capable of blocking a class of voltage-gated potassium channels. This Apis mellifera (Honeybee) protein is Mast cell degranulating peptide.